A 788-amino-acid polypeptide reads, in one-letter code: 5-methyltetrahydropteroyltriglutamate--homocysteine methyltransferase (788 aa).

5-methyltetrahydropteroyltri-L-glutamate-binding positions include 24-27 (RELK) and K140. Residues 463–465 (IGS) and E516 each bind L-homocysteine. L-methionine contacts are provided by residues 463-465 (IGS) and E516. 5-methyltetrahydropteroyltri-L-glutamate is bound by residues 547–548 (RC) and W593. D631 contacts L-homocysteine. D631 is a binding site for L-methionine. Position 637 (E637) interacts with 5-methyltetrahydropteroyltri-L-glutamate. Residues H673, C675, and E697 each coordinate Zn(2+). The active-site Proton donor is H726. Zn(2+) is bound at residue C758.

This sequence belongs to the vitamin-B12 independent methionine synthase family. It depends on Zn(2+) as a cofactor.

The catalysed reaction is 5-methyltetrahydropteroyltri-L-glutamate + L-homocysteine = tetrahydropteroyltri-L-glutamate + L-methionine. The protein operates within amino-acid biosynthesis; L-methionine biosynthesis via de novo pathway; L-methionine from L-homocysteine (MetE route): step 1/1. In terms of biological role, catalyzes the transfer of a methyl group from 5-methyltetrahydrofolate to homocysteine resulting in methionine formation. This Rhodopseudomonas palustris (strain TIE-1) protein is 5-methyltetrahydropteroyltriglutamate--homocysteine methyltransferase.